A 345-amino-acid polypeptide reads, in one-letter code: Glycerol-3-phosphate dehydrogenase [NAD(P)+] (345 aa).

NADPH-binding residues include serine 11, tryptophan 12, arginine 32, arginine 33, and lysine 105. Positions 105, 136, and 138 each coordinate sn-glycerol 3-phosphate. Alanine 140 contacts NADPH. Residues lysine 191, aspartate 244, serine 254, arginine 255, and asparagine 256 each contribute to the sn-glycerol 3-phosphate site. Lysine 191 (proton acceptor) is an active-site residue. Residue arginine 255 participates in NADPH binding. Residues valine 279 and glutamate 281 each contribute to the NADPH site.

Belongs to the NAD-dependent glycerol-3-phosphate dehydrogenase family.

It localises to the cytoplasm. It catalyses the reaction sn-glycerol 3-phosphate + NAD(+) = dihydroxyacetone phosphate + NADH + H(+). The enzyme catalyses sn-glycerol 3-phosphate + NADP(+) = dihydroxyacetone phosphate + NADPH + H(+). The protein operates within membrane lipid metabolism; glycerophospholipid metabolism. Its function is as follows. Catalyzes the reduction of the glycolytic intermediate dihydroxyacetone phosphate (DHAP) to sn-glycerol 3-phosphate (G3P), the key precursor for phospholipid synthesis. The protein is Glycerol-3-phosphate dehydrogenase [NAD(P)+] of Halalkalibacterium halodurans (strain ATCC BAA-125 / DSM 18197 / FERM 7344 / JCM 9153 / C-125) (Bacillus halodurans).